The primary structure comprises 161 residues: Nucleotide-binding protein Bamb_2603 (161 aa).

It belongs to the YajQ family.

Its function is as follows. Nucleotide-binding protein. The polypeptide is Nucleotide-binding protein Bamb_2603 (Burkholderia ambifaria (strain ATCC BAA-244 / DSM 16087 / CCUG 44356 / LMG 19182 / AMMD) (Burkholderia cepacia (strain AMMD))).